The primary structure comprises 258 residues: Tryptophan synthase alpha chain (258 aa).

Residues Glu52 and Asp63 each act as proton acceptor in the active site.

It belongs to the TrpA family. In terms of assembly, tetramer of two alpha and two beta chains.

The catalysed reaction is (1S,2R)-1-C-(indol-3-yl)glycerol 3-phosphate + L-serine = D-glyceraldehyde 3-phosphate + L-tryptophan + H2O. It participates in amino-acid biosynthesis; L-tryptophan biosynthesis; L-tryptophan from chorismate: step 5/5. Its function is as follows. The alpha subunit is responsible for the aldol cleavage of indoleglycerol phosphate to indole and glyceraldehyde 3-phosphate. This is Tryptophan synthase alpha chain from Streptococcus pneumoniae serotype 19F (strain G54).